A 123-amino-acid polypeptide reads, in one-letter code: Small ribosomal subunit protein uS13 (123 aa).

The segment at 93-123 (HRKGLPVRGQNTKNNARTRKGPAKAIAGKKK) is disordered. The segment covering 108–123 (ARTRKGPAKAIAGKKK) has biased composition (basic residues).

Belongs to the universal ribosomal protein uS13 family. As to quaternary structure, part of the 30S ribosomal subunit. Forms a loose heterodimer with protein S19. Forms two bridges to the 50S subunit in the 70S ribosome.

In terms of biological role, located at the top of the head of the 30S subunit, it contacts several helices of the 16S rRNA. In the 70S ribosome it contacts the 23S rRNA (bridge B1a) and protein L5 of the 50S subunit (bridge B1b), connecting the 2 subunits; these bridges are implicated in subunit movement. Contacts the tRNAs in the A and P-sites. The protein is Small ribosomal subunit protein uS13 of Leuconostoc mesenteroides subsp. mesenteroides (strain ATCC 8293 / DSM 20343 / BCRC 11652 / CCM 1803 / JCM 6124 / NCDO 523 / NBRC 100496 / NCIMB 8023 / NCTC 12954 / NRRL B-1118 / 37Y).